A 564-amino-acid polypeptide reads, in one-letter code: Keratin, type II cytoskeletal 6B (564 aa).

The span at 1-11 shows a compositional bias: low complexity; sequence MASTSTTIRSH. Residues 1 to 23 form a disordered region; that stretch reads MASTSTTIRSHSSSRRGFSANSA. N-acetylalanine is present on Ala-2. Positions 2–162 are head; it reads ASTSTTIRSH…DPAIQRVRAE (161 aa). Residues 163–198 form a coil 1A region; that stretch reads EREQIKTLNNKFASFIDKVRFLEQQNKVLDTKWTLL. The IF rod domain maps to 163 to 476; the sequence is EREQIKTLNN…KLLEGEECRL (314 aa). Residues 199-217 form a linker 1 region; the sequence is QEQGTKTVRQNLEPLFEQY. The coil 1B stretch occupies residues 218–309; sequence INNLRRQLDN…ALYDAELSQM (92 aa). The linker 12 stretch occupies residues 310–333; sequence QTHISDTSVVLSMDNNRNLDLDSI. The coil 2 stretch occupies residues 334 to 472; the sequence is IAEVKAQYEE…ATYRKLLEGE (139 aa). The interval 473 to 564 is tail; the sequence is ECRLNGEGVG…SSSSRKSYKH (92 aa). The segment at 533–564 is disordered; that stretch reads RATGGGLSSVGGGSSTIKYTTTSSSSRKSYKH. Gly residues predominate over residues 534–546; it reads ATGGGLSSVGGGS. The segment covering 547–564 has biased composition (low complexity); that stretch reads STIKYTTTSSSSRKSYKH.

Belongs to the intermediate filament family. Heterodimer of a type I and a type II keratin. KRT6 isomers associate with KRT16 and/or KRT17. Constitutively expressed in distinct types of epithelia such as those in oral mucosa, esophagus, papillae of tongue and hair follicle outer root sheath.

The protein is Keratin, type II cytoskeletal 6B (KRT6B) of Homo sapiens (Human).